The sequence spans 77 residues: uncharacterized protein (77 aa).

Helical transmembrane passes span 3–23 (FNFI…SFLF) and 35–55 (IGAI…VALL).

It localises to the cell membrane. This is an uncharacterized protein from Haemophilus influenzae (strain ATCC 51907 / DSM 11121 / KW20 / Rd).